The primary structure comprises 327 residues: BarH-like 1 homeobox protein (327 aa).

Disordered stretches follow at residues 1-90 (MEGS…AQSR), 112-184 (APYS…ARTA), and 305-327 (GASE…AQPR). Low complexity predominate over residues 33 to 54 (RSPLELSPRSESSSDCSSPASP). The span at 79-90 (QPGQLSAPAQSR) shows a compositional bias: polar residues. Composition is skewed to basic and acidic residues over residues 133–143 (AAEDFRDKLDK) and 152–166 (SEYK…EISS). The segment at residues 178–237 (PRKARTAFTDHQLAQLERSFERQKYLSVQDRMELAASLNLTDTQVKTWYQNRRTKWKRQT) is a DNA-binding region (homeobox). Positions 316–327 (LAGVLPRAAQPR) are enriched in low complexity.

The protein belongs to the BAR homeobox family.

It is found in the nucleus. This is BarH-like 1 homeobox protein (BARHL1) from Homo sapiens (Human).